Reading from the N-terminus, the 170-residue chain is Ecotin (170 aa).

The signal sequence occupies residues 1–21 (MNKASVVFSGLLMAVSASAIA). C78 and C115 are oxidised to a cystine.

The protein belongs to the protease inhibitor I11 (ecotin) family. As to quaternary structure, homodimer.

It is found in the periplasm. Functionally, general inhibitor of pancreatic serine proteases: inhibits chymotrypsin, trypsin, elastases, factor X, kallikrein as well as a variety of other proteases. This Serratia proteamaculans (strain 568) protein is Ecotin.